Here is a 371-residue protein sequence, read N- to C-terminus: Phospho-N-acetylmuramoyl-pentapeptide-transferase (371 aa).

The next 9 helical transmembrane spans lie at 25-45, 77-94, 136-156, 172-192, 204-224, 240-260, 269-289, 296-316, and 348-368; these read TLLA…WLIA, MGGL…ALWA, IGWQ…HPAS, LIPH…IVGF, GLAI…AYVA, GTGE…AFLW, FMGD…AFMI, VIVG…VGVF, and KVVL…LATL.

Belongs to the glycosyltransferase 4 family. MraY subfamily. Requires Mg(2+) as cofactor.

Its subcellular location is the cell inner membrane. It carries out the reaction UDP-N-acetyl-alpha-D-muramoyl-L-alanyl-gamma-D-glutamyl-meso-2,6-diaminopimeloyl-D-alanyl-D-alanine + di-trans,octa-cis-undecaprenyl phosphate = di-trans,octa-cis-undecaprenyl diphospho-N-acetyl-alpha-D-muramoyl-L-alanyl-D-glutamyl-meso-2,6-diaminopimeloyl-D-alanyl-D-alanine + UMP. The protein operates within cell wall biogenesis; peptidoglycan biosynthesis. Catalyzes the initial step of the lipid cycle reactions in the biosynthesis of the cell wall peptidoglycan: transfers peptidoglycan precursor phospho-MurNAc-pentapeptide from UDP-MurNAc-pentapeptide onto the lipid carrier undecaprenyl phosphate, yielding undecaprenyl-pyrophosphoryl-MurNAc-pentapeptide, known as lipid I. This Opitutus terrae (strain DSM 11246 / JCM 15787 / PB90-1) protein is Phospho-N-acetylmuramoyl-pentapeptide-transferase.